The sequence spans 1124 residues: MGRKKKLPTGVSSGVSHASSAPKSVGGCCVPLGLPQPLLLEEKKFLLAVERGDMPNVRRILQKALRHQHININCMDPLGRRALTLAIDNENLEMVELLVVMGVETKDALLHAINAEFVEAVELLLEHEELIYKEGEPYSWQKVDINTAMFAPDITPLMLAAHKNNFEILRILLDRGAAVPVPHDIRCGCEECVRLTAEDSLRHSLSRVNIYRALCSPSLICLTSNDPIITAFQLSWELRNLALTEQECKSEYMDLRRQCQKFAVDLLDQTRTSNELAIILNYDPQMSSYEPGDRMSLTRLVQAISYKQKKFVAHSNIQQLLSSIWYDGLPGFRRKSIVDKVICIAQVAVLFPLYCLIYMCAPNCRTGQLMRKPFMKFLIHASSYLFFLFILILVSQRADDDFVRIFGTTRMKKELAEQELRQRGQTPSKLELIVVMYVIGFVWEEVQEIFAVGMKSYLRNMWNFIDFLRNSLYVSVMCLRAFAYIQQATEIARDPQMAYIPREKWHDFDPQLIAEGLFAAANVFSALKLVHLFSINPHLGPLQISLGRMVIDIVKFFFIYTLVLFAFACGLNQLLWYFAALEKSKCYVLPGGEADWGSHGDSCMKWRRFGNLFESSQSLFWASFGMVGLDDFELSGIKSYTRFWGLLMFGSYSVINVIVLLNLLIAMMSNSYAMIDEHSDTEWKFARTKLWMSYFEDSATLPPPFNVLPSVKWVIRIFRKSSKTIDRQRSKKRKEQEQFSEYDNIMRSLVWRYVAAMHRKFENNPVSEDDINEVKSEINTMRYEMLEIFENSGMDVSSANKKERQPRPRRIKVWERRLMKGFQVAPVQNGCELDAFGNVNGQGEMQEIKVESIPSKPAKETAKERFQRVARTVLLQSTTHKWNVVLRAAKDSQIGRCTKNERKSLQNLGRAIEEAKRLIMLNPGCPSGRESPIRIEFEDEKTSTLLELLNQISAEISDSEKPKIRPIWRPPLKTVPARAMAANNTRSLTAPELKISRKSSPAPTPTPTPGVSHTALSQFRNRELPLCPSKLIANSAPSAPTAPPKKSAPTAPTPTYKPTTHAPFSVEGGNRENTRASDGVRSDNSNFDIHVVDLDEKGGHLGRDNVSDISSIASTSPQRPKHRN.

Residues 1 to 24 (MGRKKKLPTGVSSGVSHASSAPKS) form a disordered region. Residues 1-340 (MGRKKKLPTG…GFRRKSIVDK (340 aa)) are Cytoplasmic-facing. Low complexity predominate over residues 10–21 (GVSSGVSHASSA). ANK repeat units follow at residues 40 to 69 (LEEKKFLLAVERGDMPNVRRILQKALRHQH), 78 to 107 (LGRRALTLAIDNENLEMVELLVVMGVETKD), and 152 to 181 (PDITPLMLAAHKNNFEILRILLDRGAAVPV). A helical membrane pass occupies residues 341–361 (VICIAQVAVLFPLYCLIYMCA). Topologically, residues 362 to 373 (PNCRTGQLMRKP) are extracellular. The helical transmembrane segment at 374 to 394 (FMKFLIHASSYLFFLFILILV) threads the bilayer. At 395–431 (SQRADDDFVRIFGTTRMKKELAEQELRQRGQTPSKLE) the chain is on the cytoplasmic side. A helical membrane pass occupies residues 432–452 (LIVVMYVIGFVWEEVQEIFAV). The Extracellular portion of the chain corresponds to 453-512 (GMKSYLRNMWNFIDFLRNSLYVSVMCLRAFAYIQQATEIARDPQMAYIPREKWHDFDPQL). A helical membrane pass occupies residues 513–533 (IAEGLFAAANVFSALKLVHLF). The Cytoplasmic segment spans residues 534–548 (SINPHLGPLQISLGR). Residues 549-569 (MVIDIVKFFFIYTLVLFAFAC) form a helical membrane-spanning segment. Over 570–645 (GLNQLLWYFA…GIKSYTRFWG (76 aa)) the chain is Extracellular. The helical transmembrane segment at 646–666 (LLMFGSYSVINVIVLLNLLIA) threads the bilayer. The Cytoplasmic portion of the chain corresponds to 667-1124 (MMSNSYAMID…TSPQRPKHRN (458 aa)). Calmodulin-binding stretches follow at residues 710–728 (SVKWVIRIFRKSSKTIDRQ) and 853–895 (IPSK…SQIG). Disordered regions lie at residues 978–1013 (RAMAANNTRSLTAPELKISRKSSPAPTPTPTPGVSH) and 1031–1124 (LIAN…KHRN). Positions 1035-1063 (SAPSAPTAPPKKSAPTAPTPTYKPTTHAP) are enriched in low complexity. Composition is skewed to basic and acidic residues over residues 1069-1081 (GNRENTRASDGVR) and 1090-1106 (HVVDLDEKGGHLGRDNV). The segment covering 1107–1118 (SDISSIASTSPQ) has biased composition (polar residues).

This sequence belongs to the transient receptor (TC 1.A.4) family. STrpC subfamily. Forms heteromultimers with Trpgamma and, to a lower extent, with trp. Interacts with Fkbp59 in vivo and is found in the inaD signaling complex. Expressed predominantly in the rhabdomeres of photoreceptor cells.

Its subcellular location is the membrane. It localises to the cell projection. The protein resides in the rhabdomere membrane. Functionally, a light-sensitive calcium channel that is required for inositide-mediated Ca(2+) entry in the retina during phospholipase C (PLC)-mediated phototransduction. Required for vision in the dark and in dim light. Binds calmodulin. Trp and trpl act together in the light response, although it is unclear whether as heteromultimers or distinct units. Also forms a functional cation channel with Trpgamma. Activated by fatty acids, metabolic stress, inositols and GTP-binding proteins. The chain is Transient-receptor-potential-like protein (trpl) from Drosophila melanogaster (Fruit fly).